The chain runs to 349 residues: MSKPRATYKEAGVDIEAGNSFVQKIKPLVKSTFRPEVMTEIGGFGGLFSLNAAKYKNPVLVSGTDGVGTKLKLAFLADRHDTVGIDLVAMCVNDIVVQGAEPLFFLDYLATGKLDPDKAAQIVAGIAEGCRQAGCALIGGETAEMPGFYADGEYDIAGFTVGVVEKDQIIDGSSITVGNKLIGIGSSGLHSNGYSLARRIIFDRMGLAINSPLPDSTKTVDEELLTPTRIYVRSVMNLLKDFRINGIAHITGGGLLENVPRILPKGCSASFKLGSWDMPSIFTTLQEAGNVEQNEMYRTFNMGIGMVLAVAAADVDDILSRLNGLGEQAWLIGEVKSMSKNQTEQVVLV.

It belongs to the AIR synthase family.

The protein resides in the cytoplasm. It carries out the reaction 2-formamido-N(1)-(5-O-phospho-beta-D-ribosyl)acetamidine + ATP = 5-amino-1-(5-phospho-beta-D-ribosyl)imidazole + ADP + phosphate + H(+). It participates in purine metabolism; IMP biosynthesis via de novo pathway; 5-amino-1-(5-phospho-D-ribosyl)imidazole from N(2)-formyl-N(1)-(5-phospho-D-ribosyl)glycinamide: step 2/2. The protein is Phosphoribosylformylglycinamidine cyclo-ligase of Trichlorobacter lovleyi (strain ATCC BAA-1151 / DSM 17278 / SZ) (Geobacter lovleyi).